A 302-amino-acid polypeptide reads, in one-letter code: Acetylglutamate kinase (302 aa).

Substrate contacts are provided by residues 73–74 (GG), arginine 95, and asparagine 200.

It belongs to the acetylglutamate kinase family. ArgB subfamily.

The protein resides in the cytoplasm. The catalysed reaction is N-acetyl-L-glutamate + ATP = N-acetyl-L-glutamyl 5-phosphate + ADP. Its pathway is amino-acid biosynthesis; L-arginine biosynthesis; N(2)-acetyl-L-ornithine from L-glutamate: step 2/4. Catalyzes the ATP-dependent phosphorylation of N-acetyl-L-glutamate. This is Acetylglutamate kinase from Sphingopyxis alaskensis (strain DSM 13593 / LMG 18877 / RB2256) (Sphingomonas alaskensis).